Here is a 598-residue protein sequence, read N- to C-terminus: Aspartate--tRNA(Asp/Asn) ligase (598 aa).

Glutamate 175 is an L-aspartate binding site. The interval 199 to 202 (QQFK) is aspartate. Arginine 221 and histidine 452 together coordinate L-aspartate. ATP is bound at residue 221 to 223 (RDE). ATP is bound at residue glutamate 486. Position 493 (arginine 493) interacts with L-aspartate. Residue 538 to 541 (GVDR) participates in ATP binding.

This sequence belongs to the class-II aminoacyl-tRNA synthetase family. Type 1 subfamily. Homodimer.

It localises to the cytoplasm. It carries out the reaction tRNA(Asx) + L-aspartate + ATP = L-aspartyl-tRNA(Asx) + AMP + diphosphate. In terms of biological role, aspartyl-tRNA synthetase with relaxed tRNA specificity since it is able to aspartylate not only its cognate tRNA(Asp) but also tRNA(Asn). Reaction proceeds in two steps: L-aspartate is first activated by ATP to form Asp-AMP and then transferred to the acceptor end of tRNA(Asp/Asn). The protein is Aspartate--tRNA(Asp/Asn) ligase of Gluconobacter oxydans (strain 621H) (Gluconobacter suboxydans).